Consider the following 385-residue polypeptide: tRNA-specific 2-thiouridylase MnmA (385 aa).

ATP-binding positions include 12-19 and Met-38; that span reads GLSGGVDS. Residues 108-110 are interaction with target base in tRNA; sequence NPD. The active-site Nucleophile is the Cys-113. An intrachain disulfide couples Cys-113 to Cys-210. Gly-138 contributes to the ATP binding site. Residues 160 to 162 form an interaction with tRNA region; the sequence is KDQ. Residue Cys-210 is the Cysteine persulfide intermediate of the active site.

This sequence belongs to the MnmA/TRMU family.

Its subcellular location is the cytoplasm. It carries out the reaction S-sulfanyl-L-cysteinyl-[protein] + uridine(34) in tRNA + AH2 + ATP = 2-thiouridine(34) in tRNA + L-cysteinyl-[protein] + A + AMP + diphosphate + H(+). Its function is as follows. Catalyzes the 2-thiolation of uridine at the wobble position (U34) of tRNA, leading to the formation of s(2)U34. This is tRNA-specific 2-thiouridylase MnmA from Ureaplasma parvum serovar 3 (strain ATCC 27815 / 27 / NCTC 11736).